The chain runs to 233 residues: NAD-dependent protein deacylase (233 aa).

The Deacetylase sirtuin-type domain occupies 1 to 230; the sequence is MKNIMILSGA…ALDIENFMKD (230 aa). 9–28 provides a ligand contact to NAD(+); that stretch reads GAGLSAPSGLKTFRDNDGLW. 2 residues coordinate substrate: Tyr53 and Arg56. 88–91 contacts NAD(+); that stretch reads QNVD. The Proton acceptor role is filled by His106. Residues Cys114, Cys117, Cys133, and Cys136 each coordinate Zn(2+). NAD(+)-binding positions include 172 to 174 and 200 to 202; these read GTS and NLE.

Belongs to the sirtuin family. Class III subfamily. It depends on Zn(2+) as a cofactor.

The protein localises to the cytoplasm. It carries out the reaction N(6)-acetyl-L-lysyl-[protein] + NAD(+) + H2O = 2''-O-acetyl-ADP-D-ribose + nicotinamide + L-lysyl-[protein]. The enzyme catalyses N(6)-succinyl-L-lysyl-[protein] + NAD(+) + H2O = 2''-O-succinyl-ADP-D-ribose + nicotinamide + L-lysyl-[protein]. Functionally, NAD-dependent lysine deacetylase and desuccinylase that specifically removes acetyl and succinyl groups on target proteins. Modulates the activities of several proteins which are inactive in their acylated form. The polypeptide is NAD-dependent protein deacylase (Campylobacter jejuni subsp. jejuni serotype O:2 (strain ATCC 700819 / NCTC 11168)).